A 330-amino-acid polypeptide reads, in one-letter code: Ketol-acid reductoisomerase (NADP(+)) (330 aa).

Residues Met2–Thr181 form the KARI N-terminal Rossmann domain. NADP(+) contacts are provided by residues Tyr25–Gln28, Arg48, Ser52, and Asp82–Gln85. His107 is an active-site residue. An NADP(+)-binding site is contributed by Gly133. One can recognise a KARI C-terminal knotted domain in the interval Thr182–Phe327. Asp190, Glu194, Glu226, and Glu230 together coordinate Mg(2+). Position 251 (Ser251) interacts with substrate.

It belongs to the ketol-acid reductoisomerase family. The cofactor is Mg(2+).

It catalyses the reaction (2R)-2,3-dihydroxy-3-methylbutanoate + NADP(+) = (2S)-2-acetolactate + NADPH + H(+). It carries out the reaction (2R,3R)-2,3-dihydroxy-3-methylpentanoate + NADP(+) = (S)-2-ethyl-2-hydroxy-3-oxobutanoate + NADPH + H(+). The protein operates within amino-acid biosynthesis; L-isoleucine biosynthesis; L-isoleucine from 2-oxobutanoate: step 2/4. It participates in amino-acid biosynthesis; L-valine biosynthesis; L-valine from pyruvate: step 2/4. Its function is as follows. Involved in the biosynthesis of branched-chain amino acids (BCAA). Catalyzes an alkyl-migration followed by a ketol-acid reduction of (S)-2-acetolactate (S2AL) to yield (R)-2,3-dihydroxy-isovalerate. In the isomerase reaction, S2AL is rearranged via a Mg-dependent methyl migration to produce 3-hydroxy-3-methyl-2-ketobutyrate (HMKB). In the reductase reaction, this 2-ketoacid undergoes a metal-dependent reduction by NADPH to yield (R)-2,3-dihydroxy-isovalerate. The polypeptide is Ketol-acid reductoisomerase (NADP(+)) (Methanocorpusculum labreanum (strain ATCC 43576 / DSM 4855 / Z)).